We begin with the raw amino-acid sequence, 404 residues long: MEQPSIYNYSWVDFVFSVIGVFTFFVDWGADVWVATEFYRRGDFFWFGVLVGLMVLSSVLVQMFSWFWLQYDRGLPDLQTGGGTVLFGDRLRLSCLLHVLQLGFLCRHISAIRQGFRVWWRKEEGSEYAFYLSHDLSMLRLIETFSESAPQLTLMIYVMLRTQRARAVQFVSVAASTTSIAWMVVDYHRCLRSFLPDKARQGWASSLIYFLWNLLLIAPRVAALALFASVVGGYLGLHLLLLWLVFVTWAWLQRTHFMDSPGGEWLYRATVGIIWYFSWFNVAEGRTRGRSAIYHAFITADGAILLVTWWCCREPVQAEPYALALLLTLLLSYLLGLLFKSLYYCCFHPTLWRPPAREPGLPDDLPDADVTFRHLSIQDGAPASRPLNRRMALHAADFYSARTS.

Transmembrane regions (helical) follow at residues 14-34, 44-64, 167-187, 206-226, 227-247, 263-283, 292-312, and 319-339; these read FVFS…DVWV, FFWF…VQMF, AVQF…VVDY, SLIY…ALAL, FASV…LVFV, GEWL…FNVA, AIYH…WWCC, and EPYA…GLLF.

Belongs to the XK family.

It is found in the cell membrane. The enzyme catalyses a 1,2-diacyl-sn-glycero-3-phospho-L-serine(in) = a 1,2-diacyl-sn-glycero-3-phospho-L-serine(out). Functionally, phospholipid scramblase that promotes phosphatidylserine exposure on apoptotic cell surface, possibly by mediating phospholipid scrambling. Phosphatidylserine is a specific marker only present at the surface of apoptotic cells and acts as a specific signal for engulfment. This Tetraodon nigroviridis (Spotted green pufferfish) protein is XK-related protein 8.